The following is a 483-amino-acid chain: Protein nucleotidyltransferase YdiU (483 aa).

The ATP site is built by Gly100, Gly102, Arg103, Lys123, Asp135, Gly136, Arg189, and Arg196. Asp265 acts as the Proton acceptor in catalysis. Residues Asn266 and Asp275 each contribute to the Mg(2+) site. Residue Asp275 participates in ATP binding.

Belongs to the SELO family. Mg(2+) is required as a cofactor. Requires Mn(2+) as cofactor.

It carries out the reaction L-seryl-[protein] + ATP = 3-O-(5'-adenylyl)-L-seryl-[protein] + diphosphate. The catalysed reaction is L-threonyl-[protein] + ATP = 3-O-(5'-adenylyl)-L-threonyl-[protein] + diphosphate. It catalyses the reaction L-tyrosyl-[protein] + ATP = O-(5'-adenylyl)-L-tyrosyl-[protein] + diphosphate. The enzyme catalyses L-histidyl-[protein] + UTP = N(tele)-(5'-uridylyl)-L-histidyl-[protein] + diphosphate. It carries out the reaction L-seryl-[protein] + UTP = O-(5'-uridylyl)-L-seryl-[protein] + diphosphate. The catalysed reaction is L-tyrosyl-[protein] + UTP = O-(5'-uridylyl)-L-tyrosyl-[protein] + diphosphate. In terms of biological role, nucleotidyltransferase involved in the post-translational modification of proteins. It can catalyze the addition of adenosine monophosphate (AMP) or uridine monophosphate (UMP) to a protein, resulting in modifications known as AMPylation and UMPylation. This Gloeobacter violaceus (strain ATCC 29082 / PCC 7421) protein is Protein nucleotidyltransferase YdiU.